The sequence spans 351 residues: Terpene cyclase sdgD (351 aa).

Helical transmembrane passes span 7-27, 62-82, 89-109, 126-146, 160-180, 193-213, 229-249, 281-301, and 316-336; these read INFI…TILI, TGVP…WPVI, LSLL…LLLL, WVGL…YCAI, IPHV…LVAL, VVVA…FMAS, IYIF…LASL, FLQW…VAVY, and LEVC…LLIW.

Belongs to the membrane-bound ascI terpene cyclase family.

The protein localises to the membrane. The protein operates within secondary metabolite biosynthesis. In terms of biological role, epoxide hydrolase; part of the gene cluster that mediates the biosynthesis of the polyenes aspernidgulenes. The carbon backbone of aspernidgulenes is synthesized by the HR-PKS sdgA, which accepts acetyl-CoA as the starter unit and performs malonyl-CoA extensions as well as regioselective methylation and reduction. The resulting nonaketide offloads the HR-PKS by intramolecular lactonization to yield the 5,6-dihydro-alpha-pyrone-containing hexaenoic acids preaspernidgulene A1 and A2. The FAD-dependent monooxygenase sdgC then installs the first epoxide on the penultimate double bond. Subsequently, the FAD-dependent monooxygenase sdgF presumably generates a ketone intermediate through Meinwald rearrangement involving a hydride shift. Next, sdgC introduces another epoxide on the last olefin of the ketone intermediate after E/Z isomerization. The epoxide hydrolase sdgD then catalyzes stereospecific cyclization of the 5,6-dihydro-alpha-pyrone and opening of the epoxide ring to form an oxygenated trimethylcyclopentanone and an oxabicyclo[2.2.1]heptane unit. Finally, the bicyclic unit undergoes hydrolytic cleavage, either spontaneously or catalyzed by sdgD, to assemble the dimethyl-gamma-lactone moiety in aspernidgulene A1. The chain is Terpene cyclase sdgD from Emericella nidulans (strain FGSC A4 / ATCC 38163 / CBS 112.46 / NRRL 194 / M139) (Aspergillus nidulans).